A 176-amino-acid chain; its full sequence is ATP-dependent protease subunit HslV (176 aa).

T2 is a catalytic residue. 3 residues coordinate Na(+): G157, C160, and T163.

Belongs to the peptidase T1B family. HslV subfamily. As to quaternary structure, a double ring-shaped homohexamer of HslV is capped on each side by a ring-shaped HslU homohexamer. The assembly of the HslU/HslV complex is dependent on binding of ATP.

The protein resides in the cytoplasm. The enzyme catalyses ATP-dependent cleavage of peptide bonds with broad specificity.. With respect to regulation, allosterically activated by HslU binding. Functionally, protease subunit of a proteasome-like degradation complex believed to be a general protein degrading machinery. The polypeptide is ATP-dependent protease subunit HslV (Pseudomonas entomophila (strain L48)).